A 275-amino-acid polypeptide reads, in one-letter code: Bis(5'-nucleosyl)-tetraphosphatase, symmetrical (275 aa).

The protein belongs to the Ap4A hydrolase family.

It carries out the reaction P(1),P(4)-bis(5'-adenosyl) tetraphosphate + H2O = 2 ADP + 2 H(+). Hydrolyzes diadenosine 5',5'''-P1,P4-tetraphosphate to yield ADP. This is Bis(5'-nucleosyl)-tetraphosphatase, symmetrical from Marinomonas sp. (strain MWYL1).